The primary structure comprises 718 residues: Receptor-like protein 36 (718 aa).

An N-terminal signal peptide occupies residues 1 to 26 (MIRSLSYCFLTIYFFLSILPLPNTIA). Residues 27 to 695 (CPTRLLCRSD…SESEDQLLNW (669 aa)) lie on the Extracellular side of the membrane. 18 LRR repeats span residues 70-94 (DAIL…IGNL), 95-118 (SHLT…IGNL), 120-141 (QLES…SFAN), 143-165 (TKLS…LANL), 166-188 (TSLS…DLSG), 189-213 (LHNL…LLMI), 214-238 (PSLV…TFSL), 239-261 (SRLR…SISK), 262-286 (LVNL…ISKV), 288-310 (NLTS…VWRS), 312-334 (KLDY…EVID), 335-359 (GASL…ICKV), 360-383 (KDLY…LKYS), 384-406 (TYFH…LFIK), 407-431 (DSQL…LINC), 433-454 (RIEF…WLGS), 455-480 (LPYL…AYLG), and 481-505 (FPSI…YFAN). N93 carries an N-linked (GlcNAc...) asparagine glycan. Residues N141 and N164 are each glycosylated (N-linked (GlcNAc...) asparagine). Residue N199 is glycosylated (N-linked (GlcNAc...) asparagine). N288 carries an N-linked (GlcNAc...) asparagine glycan. Residues N373 and N393 are each glycosylated (N-linked (GlcNAc...) asparagine). N528 carries an N-linked (GlcNAc...) asparagine glycan. 4 LRR repeats span residues 550–574 (FEGF…IGLL), 575–598 (SELR…LANI), 599–622 (TNLE…LGKL), and 624–647 (FLSN…QFAT). 5 N-linked (GlcNAc...) asparagine glycosylation sites follow: N581, N597, N610, N629, and N649. Residues 696 to 716 (IAAAIAFGPGMFCGLVIGHIF) traverse the membrane as a helical segment. Topologically, residues 717-718 (TS) are cytoplasmic.

This sequence belongs to the RLP family.

Its subcellular location is the cell membrane. The chain is Receptor-like protein 36 from Arabidopsis thaliana (Mouse-ear cress).